A 60-amino-acid polypeptide reads, in one-letter code: Large ribosomal subunit protein uL30 (60 aa).

This sequence belongs to the universal ribosomal protein uL30 family. As to quaternary structure, part of the 50S ribosomal subunit.

The chain is Large ribosomal subunit protein uL30 from Salinispora arenicola (strain CNS-205).